Reading from the N-terminus, the 208-residue chain is Thymidylate kinase (208 aa).

ATP is bound at residue 11–18 (GGEGVGKS).

Belongs to the thymidylate kinase family.

It catalyses the reaction dTMP + ATP = dTDP + ADP. Functionally, phosphorylation of dTMP to form dTDP in both de novo and salvage pathways of dTTP synthesis. The protein is Thymidylate kinase of Methylococcus capsulatus (strain ATCC 33009 / NCIMB 11132 / Bath).